Consider the following 340-residue polypeptide: Outer membrane protein B (340 aa).

An N-terminal signal peptide occupies residues Met1–Ala26.

This sequence belongs to the chlamydial OMP family.

It localises to the cell outer membrane. This Chlamydia muridarum (strain MoPn / Nigg) protein is Outer membrane protein B (ompB).